The following is a 229-amino-acid chain: Urease accessory protein UreF (229 aa).

Belongs to the UreF family. In terms of assembly, ureD, UreF and UreG form a complex that acts as a GTP-hydrolysis-dependent molecular chaperone, activating the urease apoprotein by helping to assemble the nickel containing metallocenter of UreC. The UreE protein probably delivers the nickel.

The protein localises to the cytoplasm. Required for maturation of urease via the functional incorporation of the urease nickel metallocenter. This is Urease accessory protein UreF from Staphylococcus aureus (strain bovine RF122 / ET3-1).